The primary structure comprises 360 residues: UDP-N-acetylglucosamine--N-acetylmuramyl-(pentapeptide) pyrophosphoryl-undecaprenol N-acetylglucosamine transferase (360 aa).

UDP-N-acetyl-alpha-D-glucosamine contacts are provided by residues 15–17, Asn-128, Arg-164, Ser-192, Ile-247, and Gln-292; that span reads TGG.

This sequence belongs to the glycosyltransferase 28 family. MurG subfamily.

It localises to the cell inner membrane. It catalyses the reaction di-trans,octa-cis-undecaprenyl diphospho-N-acetyl-alpha-D-muramoyl-L-alanyl-D-glutamyl-meso-2,6-diaminopimeloyl-D-alanyl-D-alanine + UDP-N-acetyl-alpha-D-glucosamine = di-trans,octa-cis-undecaprenyl diphospho-[N-acetyl-alpha-D-glucosaminyl-(1-&gt;4)]-N-acetyl-alpha-D-muramoyl-L-alanyl-D-glutamyl-meso-2,6-diaminopimeloyl-D-alanyl-D-alanine + UDP + H(+). The protein operates within cell wall biogenesis; peptidoglycan biosynthesis. In terms of biological role, cell wall formation. Catalyzes the transfer of a GlcNAc subunit on undecaprenyl-pyrophosphoryl-MurNAc-pentapeptide (lipid intermediate I) to form undecaprenyl-pyrophosphoryl-MurNAc-(pentapeptide)GlcNAc (lipid intermediate II). The sequence is that of UDP-N-acetylglucosamine--N-acetylmuramyl-(pentapeptide) pyrophosphoryl-undecaprenol N-acetylglucosamine transferase from Blochmanniella floridana.